The chain runs to 249 residues: 5'-nucleotidase SurE 2 (249 aa).

Asp8, Asp9, Ser40, and Asn90 together coordinate a divalent metal cation.

This sequence belongs to the SurE nucleotidase family. It depends on a divalent metal cation as a cofactor.

It localises to the cytoplasm. The catalysed reaction is a ribonucleoside 5'-phosphate + H2O = a ribonucleoside + phosphate. Functionally, nucleotidase that shows phosphatase activity on nucleoside 5'-monophosphates. This chain is 5'-nucleotidase SurE 2, found in Pyrobaculum aerophilum (strain ATCC 51768 / DSM 7523 / JCM 9630 / CIP 104966 / NBRC 100827 / IM2).